A 193-amino-acid chain; its full sequence is ATP synthase subunit b (193 aa).

The chain crosses the membrane as a helical span at residues 35-55; the sequence is IPMMLATFIAFVIVFLLLFFF.

This sequence belongs to the ATPase B chain family. In terms of assembly, F-type ATPases have 2 components, F(1) - the catalytic core - and F(0) - the membrane proton channel. F(1) has five subunits: alpha(3), beta(3), gamma(1), delta(1), epsilon(1). F(0) has three main subunits: a(1), b(2) and c(10-14). The alpha and beta chains form an alternating ring which encloses part of the gamma chain. F(1) is attached to F(0) by a central stalk formed by the gamma and epsilon chains, while a peripheral stalk is formed by the delta and b chains.

It is found in the cell membrane. Functionally, f(1)F(0) ATP synthase produces ATP from ADP in the presence of a proton or sodium gradient. F-type ATPases consist of two structural domains, F(1) containing the extramembraneous catalytic core and F(0) containing the membrane proton channel, linked together by a central stalk and a peripheral stalk. During catalysis, ATP synthesis in the catalytic domain of F(1) is coupled via a rotary mechanism of the central stalk subunits to proton translocation. In terms of biological role, component of the F(0) channel, it forms part of the peripheral stalk, linking F(1) to F(0). The polypeptide is ATP synthase subunit b (Mycoplasmopsis synoviae (strain 53) (Mycoplasma synoviae)).